The sequence spans 301 residues: MKIAVLSRNAKLYSTRRLVEAAKTRGHEVRVLDVLRCYMNIASHRPSIHYKGEDLTGFDAVIPRIGASVTFYGTAVLRQFEMIGVYPLSESVAITRSRDKLRSLQLLARKGIGLPVTGFAHAPDEIDDLIKMVGGAPVVIKLLEGTQGIGVVLAENKKAAQSVIEAFMGLKTHILVQEFIKETAGSDIRCFIIGDKVVAAMKRQAPEGEFRSNLHRGGSASLVRITPEERSTAIRAAQTMGLNVAGVDILRSNHGPLVMEVNSSPGLEGIESATGKDVATKVIEFIEKNATRGRTRTRGKG.

The 184-residue stretch at 104–287 folds into the ATP-grasp domain; the sequence is LQLLARKGIG…VATKVIEFIE (184 aa). Residues Lys141, 178–179, Asp187, and 211–213 each bind ATP; these read EF and RSN. The Mg(2+) site is built by Asp248, Glu260, and Asn262. The Mn(2+) site is built by Asp248, Glu260, and Asn262.

Belongs to the RimK family. Mg(2+) serves as cofactor. The cofactor is Mn(2+).

The chain is Probable alpha-L-glutamate ligase from Nitrosococcus oceani (strain ATCC 19707 / BCRC 17464 / JCM 30415 / NCIMB 11848 / C-107).